Consider the following 231-residue polypeptide: Extracellular deoxyribonuclease (231 aa).

The signal sequence occupies residues 1–20 (MMIFRFVTTLAASLPLLTFA).

It belongs to the EndA/NucM nuclease family.

Its subcellular location is the secreted. The protein is Extracellular deoxyribonuclease (dns) of Vibrio cholerae serotype O1 (strain ATCC 39315 / El Tor Inaba N16961).